The following is a 65-amino-acid chain: Putative antitoxin PF2058 (65 aa).

The protein belongs to the UPF0165 family.

Its function is as follows. Possibly the antitoxin component of a type II toxin-antitoxin (TA) system. The sequence is that of Putative antitoxin PF2058 from Pyrococcus furiosus (strain ATCC 43587 / DSM 3638 / JCM 8422 / Vc1).